A 611-amino-acid chain; its full sequence is MDKATMQDRQQHIRNFSIVAHIDHGKSTLADRILELTDTISKREMQDQVLDSMDLERERGITIKLNAVELHYQAKDGETYIFHLIDTPGHVDFTYEVSRSLAACEGAVLVVDAAQGVEAQTLANVYLAIDDDLEIVPVINKIDLPSAEPEKVRKEIEDDIGIDAEDAVLASAKAGIGIEDLLEQIVHKIPAPQGDLDAPLKALVFDSVYDDYRGVVLSVRIHEGIVRPGDRIRLMNSGSEYEVTEVGVNSPKPLARDYLMAGDVGYITASIKDIQDTRVGDTVTNAKNPAEKPLAGYREMNPMVYAGIYPTDNAKFTDLREALEKLKLNDAALEFEAESSQALGFGFRCGFLGLLHMDVIQERLEREFNLELITTAPSVTYHVRMTDGTEKKVENPAEMPEASAIKEIREPYVKAQIMVPNDYVGAVMELAQRKRGEFDTMEYLDSNRVNVVYHIPLSEIIFDFFDKLKSNTRGYASLDYDLDGYRASDLVKIDILLNGDQVDALSFIAHRDFAPARGREIAAKLKTIIPRQNFEIPVQATIGSKVIARTNIKAYRKDVTAHLYGGDRTRRMKLLEKQKAGKKRMKAVGKVEIPQEAFMAVLKTDEDEKPN.

One can recognise a tr-type G domain in the interval 11-193 (QHIRNFSIVA…QIVHKIPAPQ (183 aa)). GTP is bound by residues 23–28 (DHGKST) and 140–143 (NKID).

It belongs to the TRAFAC class translation factor GTPase superfamily. Classic translation factor GTPase family. LepA subfamily.

Its subcellular location is the cell membrane. It catalyses the reaction GTP + H2O = GDP + phosphate + H(+). Its function is as follows. Required for accurate and efficient protein synthesis under certain stress conditions. May act as a fidelity factor of the translation reaction, by catalyzing a one-codon backward translocation of tRNAs on improperly translocated ribosomes. Back-translocation proceeds from a post-translocation (POST) complex to a pre-translocation (PRE) complex, thus giving elongation factor G a second chance to translocate the tRNAs correctly. Binds to ribosomes in a GTP-dependent manner. The polypeptide is Elongation factor 4 1 (Lactiplantibacillus plantarum (strain ATCC BAA-793 / NCIMB 8826 / WCFS1) (Lactobacillus plantarum)).